The following is a 578-amino-acid chain: A-type ATP synthase subunit A (578 aa).

228 to 235 (GPFGSGKT) is a binding site for ATP.

The protein belongs to the ATPase alpha/beta chains family. As to quaternary structure, has multiple subunits with at least A(3), B(3), C, D, E, F, G, I and proteolipid K(x).

It localises to the cell membrane. The enzyme catalyses ATP + H2O + 4 H(+)(in) = ADP + phosphate + 5 H(+)(out). With respect to regulation, ATP hydrolysis stimulated by sulfite, ethanol, glycerol, magnesium and zinc ions, inhibited by diethylstilbestrol (DES) and less well by N,N-dicyclohexylcarbodiimide (DCCD). Functionally, component of the A-type ATP synthase that produces ATP from ADP in the presence of a proton gradient across the membrane. The A chain is the catalytic subunit. This chain is A-type ATP synthase subunit A, found in Methanosarcina mazei (strain ATCC BAA-159 / DSM 3647 / Goe1 / Go1 / JCM 11833 / OCM 88) (Methanosarcina frisia).